A 321-amino-acid chain; its full sequence is tRNA U34 carboxymethyltransferase (321 aa).

Carboxy-S-adenosyl-L-methionine-binding positions include Lys-90, Trp-104, Lys-109, Gly-129, 151-153 (DPT), 180-181 (IE), Met-195, Tyr-199, and Arg-314.

It belongs to the class I-like SAM-binding methyltransferase superfamily. CmoB family. As to quaternary structure, homotetramer.

The enzyme catalyses carboxy-S-adenosyl-L-methionine + 5-hydroxyuridine(34) in tRNA = 5-carboxymethoxyuridine(34) in tRNA + S-adenosyl-L-homocysteine + H(+). In terms of biological role, catalyzes carboxymethyl transfer from carboxy-S-adenosyl-L-methionine (Cx-SAM) to 5-hydroxyuridine (ho5U) to form 5-carboxymethoxyuridine (cmo5U) at position 34 in tRNAs. This chain is tRNA U34 carboxymethyltransferase, found in Haemophilus influenzae (strain PittGG).